A 205-amino-acid chain; its full sequence is Large ribosomal subunit protein uL18 (205 aa).

The protein belongs to the universal ribosomal protein uL18 family. As to quaternary structure, part of the 50S ribosomal subunit. Contacts the 5S and 23S rRNAs.

Its function is as follows. This is one of the proteins that bind and probably mediate the attachment of the 5S RNA into the large ribosomal subunit, where it forms part of the central protuberance. This is Large ribosomal subunit protein uL18 from Pyrobaculum arsenaticum (strain DSM 13514 / JCM 11321 / PZ6).